We begin with the raw amino-acid sequence, 318 residues long: Ribose-phosphate pyrophosphokinase 2 (318 aa).

96-101 (RQDKKD) is a binding site for ATP. Residues Asp-128, His-130, Asp-139, and Asp-143 each contribute to the Mg(2+) site. His-130 serves as a coordination point for ATP. The interval 212–227 (KDRVAILVDDMADTCG) is binding of phosphoribosylpyrophosphate.

Belongs to the ribose-phosphate pyrophosphokinase family. Homodimer. The active form is probably a hexamer composed of 3 homodimers. Mg(2+) serves as cofactor.

The enzyme catalyses D-ribose 5-phosphate + ATP = 5-phospho-alpha-D-ribose 1-diphosphate + AMP + H(+). Its pathway is metabolic intermediate biosynthesis; 5-phospho-alpha-D-ribose 1-diphosphate biosynthesis; 5-phospho-alpha-D-ribose 1-diphosphate from D-ribose 5-phosphate (route I): step 1/1. With respect to regulation, activated by magnesium and inorganic phosphate. Competitively or non-competitively inhibited by ADP, 2,3-bisphosphoglyceride or GDP. Its function is as follows. Catalyzes the synthesis of phosphoribosylpyrophosphate (PRPP) that is essential for nucleotide synthesis. This chain is Ribose-phosphate pyrophosphokinase 2 (Prps2), found in Mus musculus (Mouse).